Reading from the N-terminus, the 416-residue chain is Enterobactin exporter EntS (416 aa).

The Cytoplasmic portion of the chain corresponds to 1-21 (MNRQSWLLNLSLLKTHPAFRA). Residues 22–42 (VFLARFISIVSLGLLGVAVPV) traverse the membrane as a helical segment. Over 43 to 55 (QIQMMTHSTWQVG) the chain is Periplasmic. A helical transmembrane segment spans residues 56–76 (LSVTLTGSAMFVGLMVGGVLA). Topologically, residues 77 to 83 (DRYERKK) are cytoplasmic. Residues 84 to 104 (VILLARGTCGIGFIGLCLNAL) form a helical membrane-spanning segment. The Periplasmic segment spans residues 105 to 109 (LPEPS). A helical transmembrane segment spans residues 110-130 (LLAIYLLGLWDGFFASLGVTA). The Cytoplasmic segment spans residues 131–156 (LLAATPALVGRENLMQAGAITMLTVR). A helical transmembrane segment spans residues 157 to 177 (LGSVISPMLGGVLLATGGVAW). Residue asparagine 178 is a topological domain, periplasmic. Residues 179 to 199 (YGLAAAGTFITLLPLLSLPAL) form a helical membrane-spanning segment. Topologically, residues 200-218 (PPPPQPREHPLKSLLAAFR) are cytoplasmic. The helical transmembrane segment at 219–239 (FLLSSPLIGGIALLGGLLTMA) threads the bilayer. At 240-256 (SAVRVLYPALAINWHMS) the chain is on the periplasmic side. Residues 257–277 (AAQIGLLYAAIPLGAAVGALT) form a helical membrane-spanning segment. Residues 278–287 (SGQLAHSVRP) lie on the Cytoplasmic side of the membrane. The chain crosses the membrane as a helical span at residues 288–307 (GLLMLVSTVGSFLAIGVFGL). The Periplasmic portion of the chain corresponds to 308-313 (MPVWLL). A helical membrane pass occupies residues 314-336 (GVICLALFGWLSAISSLLQYTLL). The Cytoplasmic segment spans residues 337–356 (QTQTPEAMLGRINGLWTAQN). A helical membrane pass occupies residues 357 to 377 (VTGDAIGAALLGGLGAMMTPV). Residue alanine 378 is a topological domain, periplasmic. The helical transmembrane segment at 379-399 (SASVSGFGLVIVGLLLMLLLG) threads the bilayer. Residues 400–416 (ELRRFRQPPPVPDGAPL) lie on the Cytoplasmic side of the membrane.

The protein belongs to the major facilitator superfamily. EntS (TC 2.A.1.38) family.

It localises to the cell inner membrane. Its function is as follows. Component of an export pathway for enterobactin. The chain is Enterobactin exporter EntS from Citrobacter koseri (strain ATCC BAA-895 / CDC 4225-83 / SGSC4696).